The sequence spans 433 residues: Glutamate-1-semialdehyde 2,1-aminomutase (433 aa).

Lysine 273 is modified (N6-(pyridoxal phosphate)lysine).

It belongs to the class-III pyridoxal-phosphate-dependent aminotransferase family. HemL subfamily. In terms of assembly, homodimer. Requires pyridoxal 5'-phosphate as cofactor.

The protein localises to the cytoplasm. The catalysed reaction is (S)-4-amino-5-oxopentanoate = 5-aminolevulinate. It functions in the pathway porphyrin-containing compound metabolism; protoporphyrin-IX biosynthesis; 5-aminolevulinate from L-glutamyl-tRNA(Glu): step 2/2. The protein operates within porphyrin-containing compound metabolism; chlorophyll biosynthesis. In Gloeothece citriformis (strain PCC 7424) (Cyanothece sp. (strain PCC 7424)), this protein is Glutamate-1-semialdehyde 2,1-aminomutase.